Consider the following 235-residue polypeptide: Large ribosomal subunit protein uL1 (235 aa).

The protein belongs to the universal ribosomal protein uL1 family. Part of the 50S ribosomal subunit.

Its function is as follows. Binds directly to 23S rRNA. The L1 stalk is quite mobile in the ribosome, and is involved in E site tRNA release. Functionally, protein L1 is also a translational repressor protein, it controls the translation of the L11 operon by binding to its mRNA. This chain is Large ribosomal subunit protein uL1, found in Methylobacterium nodulans (strain LMG 21967 / CNCM I-2342 / ORS 2060).